Reading from the N-terminus, the 280-residue chain is Myelin proteolipid protein A (280 aa).

The Cytoplasmic segment spans residues 1–10 (MGWHDGCIRC). 2 S-palmitoyl cysteine lipidation sites follow: Cys-7 and Cys-10. A helical transmembrane segment spans residues 11–36 (MVGVPFASVIATVLCFAGVALFCGCG). The Extracellular portion of the chain corresponds to 37 to 59 (HEALSGTEKLIETYFSKNYQEYE). The helical transmembrane segment at 60 to 88 (YLIHVINAFQYVIYGIAIFFFLFGILLLA) threads the bilayer. Residues 89–152 (EGFYTTTAIK…LGKWLGHPDK (64 aa)) lie on the Cytoplasmic side of the membrane. Residues Cys-140 and Cys-142 are each lipidated (S-palmitoyl cysteine). Residues 153–179 (FVGVTYIITILWILIFACSAVPVYIYF) form a helical membrane-spanning segment. The Extracellular portion of the chain corresponds to 180–239 (NTWVTCQSIAFPGKTTTSVSTLCSDARMYGVLPWNAFPGKVCGTSLLAICKTSEFQMTFH). Disulfide bonds link Cys-185-Cys-229 and Cys-202-Cys-221. The helical transmembrane segment at 240–269 (LFIAAFVGAAATLVALLTYMVGASFNYAVL) threads the bilayer. The Cytoplasmic portion of the chain corresponds to 270–280 (RVTGRSDRSKF).

It belongs to the myelin proteolipid protein family.

It is found in the cell membrane. This is the major myelin protein from the central nervous system. It plays an important role in the formation or maintenance of the multilamellar structure of myelin. The chain is Myelin proteolipid protein A (plp1-a) from Xenopus laevis (African clawed frog).